The primary structure comprises 32 residues: Cytochrome b6-f complex subunit 7 (32 aa).

Residues 5 to 25 (IFTVAGVMWALVLTGLSVGFG) form a helical membrane-spanning segment.

This sequence belongs to the PetM family. The 4 large subunits of the cytochrome b6-f complex are cytochrome b6, subunit IV (17 kDa polypeptide, PetD), cytochrome f and the Rieske protein, while the 4 small subunits are PetG, PetL, PetM and PetN. The complex functions as a dimer.

The protein resides in the plastid. It is found in the chloroplast thylakoid membrane. Functionally, component of the cytochrome b6-f complex, which mediates electron transfer between photosystem II (PSII) and photosystem I (PSI), cyclic electron flow around PSI, and state transitions. The chain is Cytochrome b6-f complex subunit 7 from Emiliania huxleyi (Coccolithophore).